A 413-amino-acid chain; its full sequence is Tyrosine--tRNA ligase (413 aa).

Tyr34 provides a ligand contact to L-tyrosine. The 'HIGH' region signature appears at 39–48 (PTSHSLTVGH). Positions 164 and 168 each coordinate L-tyrosine. The 'KMSKS' region signature appears at 225–229 (KFGKS). Lys228 lines the ATP pocket. Residues 347 to 413 (ILLVDALVQT…GKKNNALIVF (67 aa)) enclose the S4 RNA-binding domain.

The protein belongs to the class-I aminoacyl-tRNA synthetase family. TyrS type 1 subfamily. In terms of assembly, homodimer.

It localises to the cytoplasm. It carries out the reaction tRNA(Tyr) + L-tyrosine + ATP = L-tyrosyl-tRNA(Tyr) + AMP + diphosphate + H(+). Its function is as follows. Catalyzes the attachment of tyrosine to tRNA(Tyr) in a two-step reaction: tyrosine is first activated by ATP to form Tyr-AMP and then transferred to the acceptor end of tRNA(Tyr). The chain is Tyrosine--tRNA ligase from Onion yellows phytoplasma (strain OY-M).